A 206-amino-acid chain; its full sequence is Small ribosomal subunit protein uS4 (206 aa).

Residues 96–158 (SRLDNVVYRM…AKKQLRIQNA (63 aa)) form the S4 RNA-binding domain.

It belongs to the universal ribosomal protein uS4 family. As to quaternary structure, part of the 30S ribosomal subunit. Contacts protein S5. The interaction surface between S4 and S5 is involved in control of translational fidelity.

In terms of biological role, one of the primary rRNA binding proteins, it binds directly to 16S rRNA where it nucleates assembly of the body of the 30S subunit. Its function is as follows. With S5 and S12 plays an important role in translational accuracy. In Francisella tularensis subsp. holarctica (strain OSU18), this protein is Small ribosomal subunit protein uS4.